Consider the following 97-residue polypeptide: Large ribosomal subunit protein bL28 (97 aa).

The protein belongs to the bacterial ribosomal protein bL28 family.

In Brucella ovis (strain ATCC 25840 / 63/290 / NCTC 10512), this protein is Large ribosomal subunit protein bL28.